Here is a 599-residue protein sequence, read N- to C-terminus: Zinc metalloproteinase dpy-31 (599 aa).

Residues 1 to 22 (MALLKPFLSRTFSSFFATITGG) form the signal peptide. Residues 23 to 211 (RNLIDSIEEL…IQHGRRTKRK (189 aa)) constitute a propeptide that is removed on maturation. The Peptidase M12A domain occupies 211–410 (KFIRSELRRW…IRLMNVIYCS (200 aa)). N251 carries an N-linked (GlcNAc...) asparagine glycan. 5 disulfide bridges follow: C254/C409, C277/C298, C413/C433, C435/C444, and C455/C483. Position 306 (H306) interacts with Zn(2+). Residue E307 is part of the active site. Zn(2+) is bound by residues H310 and H316. Positions 405–445 (NVIYCSDSCAQKLPCQRGGYTDPRRCGRCRCPDGFTGKLCE) constitute an EGF-like domain. Positions 455-571 (CGGRIELTSS…KGFQAQVRAL (117 aa)) constitute a CUB domain. Residue N522 is glycosylated (N-linked (GlcNAc...) asparagine).

Requires Zn(2+) as cofactor.

The protein resides in the secreted. With respect to regulation, inhibited by marimastat and tripeptide hydroxamic acids. Functionally, metalloprotease which cleaves the carboxyl terminus of procollagens to mature collagens. Probably involved in cuticular collagen maturation. The chain is Zinc metalloproteinase dpy-31 from Brugia malayi (Filarial nematode worm).